Consider the following 212-residue polypeptide: Protein irg-1 (212 aa).

As to expression, expressed in the intestine.

Plays a role in innate immunity by conferring resistance to virulent strains of the Gram-negative bacterium P.aeruginosa via the zip-2 pathway. Can act independently of several immunity-related pathways including pmk-1 p38MAPK, dbl-1 TGF-beta, kgb-1 JNK and bar-1/beta-catenin pathways. This chain is Protein irg-1, found in Caenorhabditis elegans.